A 396-amino-acid chain; its full sequence is 1-deoxy-D-xylulose 5-phosphate reductoisomerase (396 aa).

NADPH contacts are provided by Thr13, Gly14, Ser15, Ile16, and Asn127. A 1-deoxy-D-xylulose 5-phosphate-binding site is contributed by Lys128. NADPH is bound at residue Glu129. Mn(2+) is bound at residue Asp153. Residues Ser154, Glu155, Ser184, and His207 each contribute to the 1-deoxy-D-xylulose 5-phosphate site. Mn(2+) is bound at residue Glu155. NADPH is bound at residue Gly213. Residues Ser220, Asn225, Lys226, and Glu229 each coordinate 1-deoxy-D-xylulose 5-phosphate. Position 229 (Glu229) interacts with Mn(2+).

This sequence belongs to the DXR family. It depends on Mg(2+) as a cofactor. The cofactor is Mn(2+).

The catalysed reaction is 2-C-methyl-D-erythritol 4-phosphate + NADP(+) = 1-deoxy-D-xylulose 5-phosphate + NADPH + H(+). The protein operates within isoprenoid biosynthesis; isopentenyl diphosphate biosynthesis via DXP pathway; isopentenyl diphosphate from 1-deoxy-D-xylulose 5-phosphate: step 1/6. Functionally, catalyzes the NADPH-dependent rearrangement and reduction of 1-deoxy-D-xylulose-5-phosphate (DXP) to 2-C-methyl-D-erythritol 4-phosphate (MEP). This is 1-deoxy-D-xylulose 5-phosphate reductoisomerase from Stutzerimonas stutzeri (strain A1501) (Pseudomonas stutzeri).